The chain runs to 1197 residues: DExH-box ATP-dependent RNA helicase DExH3 (1197 aa).

A Helicase ATP-binding domain is found at 309–476 (LKAIAANQVV…FGGAPAMHIP (168 aa)). Position 322 to 329 (322 to 329 (GETGCGKT)) interacts with ATP. Residues 423 to 426 (DEIH) carry the DEIH box motif. The Helicase C-terminal domain maps to 564–738 (LIENVLCHIV…SLCLQIKSLG (175 aa)).

It belongs to the DExH box helicase family.

It catalyses the reaction ATP + H2O = ADP + phosphate + H(+). This is DExH-box ATP-dependent RNA helicase DExH3 from Arabidopsis thaliana (Mouse-ear cress).